A 158-amino-acid chain; its full sequence is NAD(P)H-quinone oxidoreductase subunit J, chloroplastic (158 aa).

Belongs to the complex I 30 kDa subunit family. As to quaternary structure, NDH is composed of at least 16 different subunits, 5 of which are encoded in the nucleus.

The protein localises to the plastid. The protein resides in the chloroplast thylakoid membrane. The catalysed reaction is a plastoquinone + NADH + (n+1) H(+)(in) = a plastoquinol + NAD(+) + n H(+)(out). It carries out the reaction a plastoquinone + NADPH + (n+1) H(+)(in) = a plastoquinol + NADP(+) + n H(+)(out). Functionally, NDH shuttles electrons from NAD(P)H:plastoquinone, via FMN and iron-sulfur (Fe-S) centers, to quinones in the photosynthetic chain and possibly in a chloroplast respiratory chain. The immediate electron acceptor for the enzyme in this species is believed to be plastoquinone. Couples the redox reaction to proton translocation, and thus conserves the redox energy in a proton gradient. This Pelargonium hortorum (Common geranium) protein is NAD(P)H-quinone oxidoreductase subunit J, chloroplastic.